Reading from the N-terminus, the 307-residue chain is D-alanine--D-alanine ligase (307 aa).

One can recognise an ATP-grasp domain in the interval 105–304; sequence KMLWKGFGLP…FEKLVEKILE (200 aa). Position 135–190 (135–190) interacts with ATP; sequence VARLGLPLMVKPSREGSSVGLTKVDSADKLKSAVDLALKFDDIVLIEEWLSGDELT. The Mg(2+) site is built by Asp258, Glu271, and Asn273.

It belongs to the D-alanine--D-alanine ligase family. Mg(2+) is required as a cofactor. The cofactor is Mn(2+).

The protein resides in the cytoplasm. It carries out the reaction 2 D-alanine + ATP = D-alanyl-D-alanine + ADP + phosphate + H(+). The protein operates within cell wall biogenesis; peptidoglycan biosynthesis. Cell wall formation. This Actinobacillus succinogenes (strain ATCC 55618 / DSM 22257 / CCUG 43843 / 130Z) protein is D-alanine--D-alanine ligase.